Consider the following 305-residue polypeptide: ATP synthase F(0) complex subunit B2, mitochondrial (305 aa).

A mitochondrion-targeting transit peptide spans 1–22 (MSLSRCLPLGQNARVIIIPARL).

This sequence belongs to the eukaryotic ATPase B chain family. As to quaternary structure, subunit of the F-type ATPase which has 2 components, CF(1) - the catalytic core - and CF(0) - the membrane proton channel.

Its subcellular location is the mitochondrion. It localises to the mitochondrion inner membrane. Mitochondrial membrane ATP synthase (F(1)F(0) ATP synthase or Complex V) produces ATP from ADP in the presence of a proton gradient across the membrane which is generated by electron transport complexes of the respiratory chain. F-type ATPases consist of two structural domains, F(1) - containing the extramembraneous catalytic core, and F(0) - containing the membrane proton channel, linked together by a central stalk and a peripheral stalk. During catalysis, ATP synthesis in the catalytic domain of F(1) is coupled via a rotary mechanism of the central stalk subunits to proton translocation. Part of the complex F(0) domain and the peripheric stalk, which acts as a stator to hold the subunits of the catalytic subcomplexes relative to the rotary elements. Plays a role in somatic development. Does not play a role in germline development. The polypeptide is ATP synthase F(0) complex subunit B2, mitochondrial (Caenorhabditis elegans).